Reading from the N-terminus, the 544-residue chain is Cytochrome P450 2U1 (544 aa).

Transmembrane regions (helical) follow at residues 30-50 (LDPS…GWSW), 113-133 (VYGS…LSDF), 261-281 (ICLN…YLPF), and 342-362 (LFYI…NSLL). Cysteine 490 lines the heme pocket. The helical transmembrane segment at 495–515 (LAKMELFLMFVSLMQSFAFAL) threads the bilayer.

Belongs to the cytochrome P450 family. Heme serves as cofactor. In terms of tissue distribution, widely expressed with stronger expression in thymus, heart and cerebellum.

It is found in the endoplasmic reticulum membrane. The protein localises to the microsome membrane. Its subcellular location is the mitochondrion inner membrane. It carries out the reaction an omega-methyl-long-chain fatty acid + reduced [NADPH--hemoprotein reductase] + O2 = an omega-hydroxy-long-chain fatty acid + oxidized [NADPH--hemoprotein reductase] + H2O + H(+). The enzyme catalyses (5Z,8Z,11Z,14Z)-eicosatetraenoate + reduced [NADPH--hemoprotein reductase] + O2 = 19-hydroxy-(5Z,8Z,11Z,14Z)-eicosatetraenoate + oxidized [NADPH--hemoprotein reductase] + H2O + H(+). The catalysed reaction is (5Z,8Z,11Z,14Z)-eicosatetraenoate + reduced [NADPH--hemoprotein reductase] + O2 = 20-hydroxy-(5Z,8Z,11Z,14Z)-eicosatetraenoate + oxidized [NADPH--hemoprotein reductase] + H2O + H(+). It catalyses the reaction N-[(5Z,8Z,11Z,14Z)-eicosatetraenoyl]-serotonin + reduced [NADPH--hemoprotein reductase] + O2 = 2-oxo-N-[(5Z,8Z,11Z,14Z)-eicosatetraenoyl]-serotonin + oxidized [NADPH--hemoprotein reductase] + H2O + H(+). Its pathway is lipid metabolism; arachidonate metabolism. A cytochrome P450 monooxygenase involved in the metabolism of arachidonic acid and its conjugates. Mechanistically, uses molecular oxygen inserting one oxygen atom into a substrate, and reducing the second into a water molecule, with two electrons provided by NADPH via cytochrome P450 reductase (CPR; NADPH-ferrihemoprotein reductase). Acts as an omega and omega-1 hydroxylase for arachidonic acid and possibly for other long chain fatty acids. May modulate the arachidonic acid signaling pathway and play a role in other fatty acid signaling processes. May down-regulate the biological activities of N-arachidonoyl-serotonin, an endocannabinoid that has anti-nociceptive effects through inhibition of fatty acid amide hydrolase FAAH, TRPV1 receptor and T-type calcium channels. Catalyzes C-2 oxidation of the indole ring of N-arachidonoyl-serotonin forming a less active product 2-oxo-N-arachidonoyl-serotonin. This is Cytochrome P450 2U1 from Homo sapiens (Human).